Here is a 269-residue protein sequence, read N- to C-terminus: 5'-nucleotidase SurE (269 aa).

Aspartate 11, aspartate 12, serine 43, and asparagine 101 together coordinate a divalent metal cation.

The protein belongs to the SurE nucleotidase family. A divalent metal cation serves as cofactor.

The protein localises to the cytoplasm. The enzyme catalyses a ribonucleoside 5'-phosphate + H2O = a ribonucleoside + phosphate. Nucleotidase that shows phosphatase activity on nucleoside 5'-monophosphates. The protein is 5'-nucleotidase SurE of Prochlorococcus marinus (strain MIT 9515).